A 371-amino-acid polypeptide reads, in one-letter code: Alanine racemase (371 aa).

Lysine 40 serves as the catalytic Proton acceptor; specific for D-alanine. The residue at position 40 (lysine 40) is an N6-(pyridoxal phosphate)lysine. Residue arginine 136 coordinates substrate. Tyrosine 263 (proton acceptor; specific for L-alanine) is an active-site residue. Methionine 310 lines the substrate pocket.

The protein belongs to the alanine racemase family. The cofactor is pyridoxal 5'-phosphate.

It carries out the reaction L-alanine = D-alanine. It functions in the pathway amino-acid biosynthesis; D-alanine biosynthesis; D-alanine from L-alanine: step 1/1. Its function is as follows. Catalyzes the interconversion of L-alanine and D-alanine. May also act on other amino acids. This Streptococcus mutans serotype c (strain ATCC 700610 / UA159) protein is Alanine racemase (alr).